Here is a 257-residue protein sequence, read N- to C-terminus: Transmembrane protein C257L (257 aa).

A run of 2 helical transmembrane segments spans residues 123-143 (LELLGYSPTPIIGGDFMFTAL) and 163-183 (MMIFFLIILLCVILGIFYVLV).

Belongs to the asfivirus C257R family.

It is found in the host membrane. The protein localises to the virion. In African swine fever virus (isolate Warthog/Namibia/Wart80/1980) (ASFV), this protein is Transmembrane protein C257L.